The primary structure comprises 566 residues: Transcription factor tasR (566 aa).

Low complexity predominate over residues 1–30 (MISASRMEESASSSSLSDAAAPPPGAALQS). A disordered region spans residues 1–31 (MISASRMEESASSSSLSDAAAPPPGAALQSI). The zn(2)-C6 fungal-type DNA-binding region spans 35–68 (CDRCRFHKLKCNVPAAGHGGPVPCERCTRAKVPC). Disordered stretches follow at residues 72 to 174 (RRRR…PGQH), 346 to 382 (EFIV…GGDD), 422 to 453 (SESD…TGTA), and 500 to 551 (RGVG…GLGG). Low complexity-rich tracts occupy residues 89–108 (PTRR…TSAA) and 359–378 (SESS…NNEA). Residues 501-532 (GVGGGGGGGGGGGGGGGGGVGGGGGGGGGPGG) are compositionally biased toward gly residues.

The protein resides in the nucleus. In terms of biological role, transcription factor that regulates the expression of the gene cluster that mediates the biosynthesis of the tetramic acids Sch210971 and Sch210972, potential anti-HIV fungal natural product that contain a decalin core. The protein is Transcription factor tasR of Hapsidospora irregularis.